Consider the following 64-residue polypeptide: DNA gyrase inhibitor YacG (64 aa).

Residues cysteine 9, cysteine 12, cysteine 28, and cysteine 32 each contribute to the Zn(2+) site. The interval 45 to 64 (KRIPSAGDLSDSDDWSEQQP) is disordered. A compositionally biased stretch (acidic residues) spans 54-64 (SDSDDWSEQQP).

Belongs to the DNA gyrase inhibitor YacG family. Interacts with GyrB. Zn(2+) is required as a cofactor.

Its function is as follows. Inhibits all the catalytic activities of DNA gyrase by preventing its interaction with DNA. Acts by binding directly to the C-terminal domain of GyrB, which probably disrupts DNA binding by the gyrase. This chain is DNA gyrase inhibitor YacG, found in Klebsiella pneumoniae (strain 342).